The sequence spans 283 residues: Thymidylate synthase (283 aa).

Arg22 provides a ligand contact to dUMP. Cys160 acts as the Nucleophile in catalysis. DUMP is bound by residues Arg180 to Asp183, Asn191, and His221 to Tyr223. A (6R)-5,10-methylene-5,6,7,8-tetrahydrofolate-binding site is contributed by Asp183. (6R)-5,10-methylene-5,6,7,8-tetrahydrofolate is bound at residue Ser282.

It belongs to the thymidylate synthase family. Bacterial-type ThyA subfamily. Homodimer.

It localises to the cytoplasm. It catalyses the reaction dUMP + (6R)-5,10-methylene-5,6,7,8-tetrahydrofolate = 7,8-dihydrofolate + dTMP. Its pathway is pyrimidine metabolism; dTTP biosynthesis. Functionally, catalyzes the reductive methylation of 2'-deoxyuridine-5'-monophosphate (dUMP) to 2'-deoxythymidine-5'-monophosphate (dTMP) while utilizing 5,10-methylenetetrahydrofolate (mTHF) as the methyl donor and reductant in the reaction, yielding dihydrofolate (DHF) as a by-product. This enzymatic reaction provides an intracellular de novo source of dTMP, an essential precursor for DNA biosynthesis. The protein is Thymidylate synthase of Haemophilus influenzae (strain PittGG).